The chain runs to 306 residues: MKGSIIGAGQVGMACAYAMLIQNTLDELVIHDIDRAKLEGEVMDLVHGIPFVEPTRIWAGELADCAGSDVVIVTAGAKQRPGETRLDLVHRNVEIFKSLIPALMEHCPSAIFLVVSNPVDVMTYVSLKLAGLPAGQVLGSGTVLDTARFRYLLAQRLGVDPRSLHAYIIGEHGDSEVAVWSKVNIAGTPIGQLSPEWDPAHLGDIFEQVRNAAYEIIRRKGATSYAIGLGVAQIVQALVRDQRRVLTVSSLTQGEYDLPEVCLSLPRVVGRQGVERTLAMSLTESERQQLHRSAHILRQVIDSIRW.

Residues V11, D32, K37, and 76 to 77 contribute to the NAD(+) site; that span reads GA. Positions 79 and 85 each coordinate substrate. NAD(+)-binding positions include S98, 115 to 117, and S140; that span reads VSN. Residue 117–120 participates in substrate binding; the sequence is NPVD. Substrate is bound at residue 145–148; the sequence is DTAR. 2 residues coordinate beta-D-fructose 1,6-bisphosphate: R150 and H165. The active-site Proton acceptor is the H172. Position 214 is a phosphotyrosine (Y214). Residue T223 coordinates substrate.

The protein belongs to the LDH/MDH superfamily. LDH family. In terms of assembly, homotetramer.

It is found in the cytoplasm. It catalyses the reaction (S)-lactate + NAD(+) = pyruvate + NADH + H(+). Its pathway is fermentation; pyruvate fermentation to lactate; (S)-lactate from pyruvate: step 1/1. Allosterically activated by fructose 1,6-bisphosphate (FBP). In terms of biological role, catalyzes the conversion of lactate to pyruvate. The sequence is that of L-lactate dehydrogenase from Synechococcus sp. (strain JA-3-3Ab) (Cyanobacteria bacterium Yellowstone A-Prime).